The chain runs to 330 residues: Diacylglycerol O-acyltransferase 2 (330 aa).

A run of 2 helical transmembrane segments spans residues 15–35 (LETM…IMAF) and 37–57 (LIVI…MFYF).

Belongs to the diacylglycerol acyltransferase family.

The protein resides in the endoplasmic reticulum membrane. The catalysed reaction is an acyl-CoA + a 1,2-diacyl-sn-glycerol = a triacyl-sn-glycerol + CoA. It carries out the reaction all-trans-retinol + an acyl-CoA = an all-trans-retinyl ester + CoA. It catalyses the reaction 2-(9Z-octadecenoyl)-glycerol + (9Z)-octadecenoyl-CoA = 1,2-di-(9Z-octadecenoyl)-sn-glycerol + CoA. The enzyme catalyses 1,2-di-(9Z-octadecenoyl)-sn-glycerol + (9Z)-octadecenoyl-CoA = 1,2,3-tri-(9Z-octadecenoyl)-glycerol + CoA. The catalysed reaction is all-trans-retinol + hexadecanoyl-CoA = all-trans-retinyl hexadecanoate + CoA. It carries out the reaction 1-O-(9Z-octadecenyl)-glycerol + (9Z)-octadecenoyl-CoA = 1-O-(9Z-octadecyl)-3-(9Z-octadecenoyl)-glycerol + CoA. It catalyses the reaction 1-(9Z-octadecenoyl)-glycerol + (9Z)-octadecenoyl-CoA = 1,2-di-(9Z-octadecenoyl)-glycerol + CoA. The enzyme catalyses 1,2-di-(9Z-octadecenoyl)-sn-glycerol + hexadecanoyl-CoA = 1,2-di-(9Z)-octadecenoyl-3-hexadecanoyl-sn-glycerol + CoA. The catalysed reaction is 1,3-di-(9Z-octadecenoyl)-glycerol + (9Z)-octadecenoyl-CoA = 1,2,3-tri-(9Z-octadecenoyl)-glycerol + CoA. It carries out the reaction 2,3-di-(9Z)-octadecenoyl-sn-glycerol + (9Z)-octadecenoyl-CoA = 1,2,3-tri-(9Z-octadecenoyl)-glycerol + CoA. It catalyses the reaction 2-(9Z-octadecenoyl)-glycerol + hexadecanoyl-CoA = 1-hexadecanoyl-2-(9Z-octadecenoyl)-sn-glycerol + CoA. It participates in glycerolipid metabolism; triacylglycerol biosynthesis. Catalyzes the terminal and only committed step in triacylglycerol synthesis by using diacylglycerol and fatty acyl CoA as substrates. Required for storage lipid synthesis. This is Diacylglycerol O-acyltransferase 2 (dgat2) from Dictyostelium discoideum (Social amoeba).